The following is a 373-amino-acid chain: tRNA-specific 2-thiouridylase MnmA (373 aa).

Residues 12-19 (GMSGGVDS) and Met-38 each bind ATP. Residues 98–100 (NPD) are interaction with target base in tRNA. Catalysis depends on Cys-103, which acts as the Nucleophile. Residues Cys-103 and Cys-200 are joined by a disulfide bond. ATP is bound at residue Gly-127. The interaction with tRNA stretch occupies residues 150 to 152 (KDQ). Cys-200 functions as the Cysteine persulfide intermediate in the catalytic mechanism. Residues 312–313 (RY) form an interaction with tRNA region.

The protein belongs to the MnmA/TRMU family.

Its subcellular location is the cytoplasm. The enzyme catalyses S-sulfanyl-L-cysteinyl-[protein] + uridine(34) in tRNA + AH2 + ATP = 2-thiouridine(34) in tRNA + L-cysteinyl-[protein] + A + AMP + diphosphate + H(+). Catalyzes the 2-thiolation of uridine at the wobble position (U34) of tRNA, leading to the formation of s(2)U34. The protein is tRNA-specific 2-thiouridylase MnmA of Streptococcus pyogenes serotype M49 (strain NZ131).